A 189-amino-acid chain; its full sequence is UPF0398 protein lhv_1265 (189 aa).

It belongs to the UPF0398 family.

The sequence is that of UPF0398 protein lhv_1265 from Lactobacillus helveticus (strain DPC 4571).